Reading from the N-terminus, the 403-residue chain is Na(+)-translocating NADH-quinone reductase subunit B (403 aa).

The next 9 membrane-spanning stretches (helical) occupy residues methionine 56–glycine 76, alanine 121–phenylalanine 141, leucine 164–glycine 184, glycine 225–glycine 245, glycine 260–threonine 280, isoleucine 287–serine 307, methionine 312–phenylalanine 332, tryptophan 348–phenylalanine 368, and glycine 371–valine 391. Threonine 230 is subject to FMN phosphoryl threonine.

This sequence belongs to the NqrB/RnfD family. Composed of six subunits; NqrA, NqrB, NqrC, NqrD, NqrE and NqrF. FMN serves as cofactor.

The protein resides in the cell inner membrane. It carries out the reaction a ubiquinone + n Na(+)(in) + NADH + H(+) = a ubiquinol + n Na(+)(out) + NAD(+). NQR complex catalyzes the reduction of ubiquinone-1 to ubiquinol by two successive reactions, coupled with the transport of Na(+) ions from the cytoplasm to the periplasm. NqrA to NqrE are probably involved in the second step, the conversion of ubisemiquinone to ubiquinol. The polypeptide is Na(+)-translocating NADH-quinone reductase subunit B (Pseudomonas aeruginosa (strain LESB58)).